A 72-amino-acid polypeptide reads, in one-letter code: Sec-independent protein translocase protein TatA (72 aa).

Residues 1–21 traverse the membrane as a helical segment; the sequence is MPFGLGLPEILVIGVIALLIF. Positions 41-72 are disordered; it reads KSGVSDEPAPQQSASKETAPNPPQSLPSGKDS.

It belongs to the TatA/E family. As to quaternary structure, forms a complex with TatC.

It localises to the cell inner membrane. In terms of biological role, part of the twin-arginine translocation (Tat) system that transports large folded proteins containing a characteristic twin-arginine motif in their signal peptide across membranes. TatA could form the protein-conducting channel of the Tat system. This Gloeobacter violaceus (strain ATCC 29082 / PCC 7421) protein is Sec-independent protein translocase protein TatA.